The following is a 253-amino-acid chain: 1-(5-phosphoribosyl)-5-[(5-phosphoribosylamino)methylideneamino] imidazole-4-carboxamide isomerase (253 aa).

D8 functions as the Proton acceptor in the catalytic mechanism. D131 (proton donor) is an active-site residue.

It belongs to the HisA/HisF family.

The protein localises to the cytoplasm. It carries out the reaction 1-(5-phospho-beta-D-ribosyl)-5-[(5-phospho-beta-D-ribosylamino)methylideneamino]imidazole-4-carboxamide = 5-[(5-phospho-1-deoxy-D-ribulos-1-ylimino)methylamino]-1-(5-phospho-beta-D-ribosyl)imidazole-4-carboxamide. It participates in amino-acid biosynthesis; L-histidine biosynthesis; L-histidine from 5-phospho-alpha-D-ribose 1-diphosphate: step 4/9. In Polynucleobacter necessarius subsp. necessarius (strain STIR1), this protein is 1-(5-phosphoribosyl)-5-[(5-phosphoribosylamino)methylideneamino] imidazole-4-carboxamide isomerase.